Consider the following 93-residue polypeptide: Small ribosomal subunit protein uS19 (93 aa).

Belongs to the universal ribosomal protein uS19 family.

Functionally, protein S19 forms a complex with S13 that binds strongly to the 16S ribosomal RNA. The polypeptide is Small ribosomal subunit protein uS19 (Mycolicibacterium smegmatis (strain ATCC 700084 / mc(2)155) (Mycobacterium smegmatis)).